Reading from the N-terminus, the 230-residue chain is MRVVIAQCSVDYVGRLDAHLPMADRLILIKADGSVSIHADDRAYKPLNWMTPPCTFEESAIEDIDGEDTGEKLWLVENPKGEQLRITIAQIHQEIDMDLGEDPGLVKDGVEAHLQELLAEHIETLGEKYSLVRREYPTAIGPVDIMAKNSKNEFVAVEVKRRGGIDGVEQLTRYLELLNRDDLLAPVHGVFAAQEIKPQARTLAEDRGIRCVVLDYQELRGIESNELRLF.

The protein belongs to the NucS endonuclease family.

It localises to the cytoplasm. Cleaves both 3' and 5' ssDNA extremities of branched DNA structures. The polypeptide is Endonuclease NucS (Corynebacterium aurimucosum (strain ATCC 700975 / DSM 44827 / CIP 107346 / CN-1) (Corynebacterium nigricans)).